A 62-amino-acid chain; its full sequence is Photosystem II reaction center protein Z (62 aa).

Helical transmembrane passes span 8–28 (AVFA…VVFA) and 41–61 (FSGT…NSLI).

The protein belongs to the PsbZ family. In terms of assembly, PSII is composed of 1 copy each of membrane proteins PsbA, PsbB, PsbC, PsbD, PsbE, PsbF, PsbH, PsbI, PsbJ, PsbK, PsbL, PsbM, PsbT, PsbY, PsbZ, Psb30/Ycf12, at least 3 peripheral proteins of the oxygen-evolving complex and a large number of cofactors. It forms dimeric complexes.

The protein resides in the plastid. Its subcellular location is the chloroplast thylakoid membrane. Its function is as follows. May control the interaction of photosystem II (PSII) cores with the light-harvesting antenna, regulates electron flow through the 2 photosystem reaction centers. PSII is a light-driven water plastoquinone oxidoreductase, using light energy to abstract electrons from H(2)O, generating a proton gradient subsequently used for ATP formation. The sequence is that of Photosystem II reaction center protein Z from Cucumis sativus (Cucumber).